The chain runs to 418 residues: Zinc metalloproteinase nas-8 (418 aa).

A signal peptide spans methionine 1–alanine 28. Residues glutamine 29–arginine 100 constitute a propeptide that is removed on maturation. Residues asparagine 101–proline 296 enclose the Peptidase M12A domain. Cystine bridges form between cysteine 143-cysteine 295, cysteine 165-cysteine 184, cysteine 347-cysteine 381, cysteine 354-cysteine 374, and cysteine 361-cysteine 378. Histidine 192 serves as a coordination point for Zn(2+). Glutamate 193 is an active-site residue. Zn(2+) is bound by residues histidine 196 and histidine 202. In terms of domain architecture, ShKT spans cysteine 347–cysteine 381.

Requires Zn(2+) as cofactor.

The protein resides in the secreted. The enzyme catalyses Hydrolysis of peptide bonds in substrates containing five or more amino acids, preferentially with Ala in P1', and Pro in P2'.. With respect to regulation, inhibited by ethylene glycol-bis(2-aminoethylether)-N,N,N,N-tetraacetic acid (EGTA), ethylenediaminetetraacetic acid (EDTA) and o-phenanthroline. In terms of biological role, metalloprotease. This is Zinc metalloproteinase nas-8 from Steinernema carpocapsae (Entomopathogenic nematode).